The following is a 215-amino-acid chain: MYEAGKRASFMGGAGIWILALSVLMHVVCSETQGNPESCNVPGPQGPPGMRGPPGTPGKPGPPGWNGFPGLPGPPGPPGMTVNCHSKGTSAFAVKANELPPAPSQPVIFKEALHDAQGHFDLATGVFTCPVPGLYQFGFHIEAVQRAVKVSLMRNGTQVMEREAEAQDGYEHISGTAILQLGMEDRVWLENKLSQTDLERGTVQAVFSGFLIHEN.

An N-terminal signal peptide occupies residues 1–30; that stretch reads MYEAGKRASFMGGAGIWILALSVLMHVVCS. The tract at residues 34-79 is disordered; the sequence is GNPESCNVPGPQGPPGMRGPPGTPGKPGPPGWNGFPGLPGPPGPPG. In terms of domain architecture, Collagen-like spans 43–81; the sequence is GPQGPPGMRGPPGTPGKPGPPGWNGFPGLPGPPGPPGMT. Residues 44 to 63 show a composition bias toward pro residues; sequence PQGPPGMRGPPGTPGKPGPP. A C1q domain is found at 85 to 215; sequence HSKGTSAFAV…VFSGFLIHEN (131 aa). The N-linked (GlcNAc...) asparagine glycan is linked to N155.

As to expression, plasma; synthesized in the liver.

Its subcellular location is the secreted. Functionally, plasma proteins HP-20, HP-25, HP-27 and HP-55 form a 140 kDa complex via disulfide bonds in the plasma and are hibernation specific. In Tamias sibiricus (Siberian chipmunk), this protein is Hibernation-associated plasma protein HP-27.